The following is a 248-amino-acid chain: Biosynthetic peptidoglycan transglycosylase (248 aa).

A helical transmembrane segment spans residues 17 to 37 (LLIFFFASTILAVIVYRFMPV).

This sequence belongs to the glycosyltransferase 51 family.

It localises to the cell inner membrane. The catalysed reaction is [GlcNAc-(1-&gt;4)-Mur2Ac(oyl-L-Ala-gamma-D-Glu-L-Lys-D-Ala-D-Ala)](n)-di-trans,octa-cis-undecaprenyl diphosphate + beta-D-GlcNAc-(1-&gt;4)-Mur2Ac(oyl-L-Ala-gamma-D-Glu-L-Lys-D-Ala-D-Ala)-di-trans,octa-cis-undecaprenyl diphosphate = [GlcNAc-(1-&gt;4)-Mur2Ac(oyl-L-Ala-gamma-D-Glu-L-Lys-D-Ala-D-Ala)](n+1)-di-trans,octa-cis-undecaprenyl diphosphate + di-trans,octa-cis-undecaprenyl diphosphate + H(+). The protein operates within cell wall biogenesis; peptidoglycan biosynthesis. Its function is as follows. Peptidoglycan polymerase that catalyzes glycan chain elongation from lipid-linked precursors. This chain is Biosynthetic peptidoglycan transglycosylase, found in Bacteroides thetaiotaomicron (strain ATCC 29148 / DSM 2079 / JCM 5827 / CCUG 10774 / NCTC 10582 / VPI-5482 / E50).